The sequence spans 87 residues: Kappa-bungarotoxin (87 aa).

The signal sequence occupies residues 1 to 21 (MKTLLLTLVVVTIVCLDLGYT). Intrachain disulfides connect Cys-24–Cys-42, Cys-35–Cys-63, Cys-48–Cys-52, Cys-67–Cys-79, and Cys-80–Cys-85.

The protein belongs to the three-finger toxin family. Long-chain subfamily. Kappa-neurotoxin sub-subfamily. In terms of assembly, homodimer and heterodimer; non-covalently linked. As to expression, expressed by the venom gland.

Its subcellular location is the secreted. Functionally, postsynaptic neurotoxin that binds and inhibits neuronal nicotinic acetylcholine receptors (nAChR) with high affinity (IC(50)&lt;100 nM). Is a selective, and slowly reversible antagonist of alpha-3/CHRNA3-containing and some alpha-4/CHRNA4-containing AChRs. The polypeptide is Kappa-bungarotoxin (Bungarus multicinctus (Many-banded krait)).